The sequence spans 1857 residues: Peripheral-type benzodiazepine receptor-associated protein 1 (1857 aa).

3 disordered regions span residues 1 to 103 (MEQL…RPED), 284 to 321 (QRET…QEDA), and 565 to 629 (PKDL…DTAS). Residues 55 to 67 (LRSEESSKPKGDG) show a composition bias toward basic and acidic residues. Polar residues predominate over residues 87–96 (LGQQASSSGP). Positions 289 to 298 (PLPPSWPPGP) are enriched in pro residues. 2 stretches are compositionally biased toward low complexity: residues 299 to 316 (ALQA…GEAT) and 603 to 616 (SLSN…IHNS). One can recognise an SH3 1 domain in the interval 653 to 720 (ARIQVFLARY…PSNFVERVSD (68 aa)). The segment at 729 to 789 (PELADLSHSS…PSPEGLGEPP (61 aa)) is disordered. Over residues 755-764 (GGQSSVGRSQ) the composition is skewed to low complexity. 3 Fibronectin type-III domains span residues 791–882 (VPYP…ARAG), 884–976 (VPSQ…TLPA), and 981–1081 (APLD…LAPA). Disordered stretches follow at residues 1083–1311 (LPAR…SDEE), 1330–1479 (FSIP…CSRG), and 1501–1601 (YDSE…RGVR). The span at 1098–1116 (ARAPLASASPGPGDPSSPL) shows a compositional bias: low complexity. Basic and acidic residues predominate over residues 1138–1147 (EMAKGSHEDP). A compositionally biased stretch (polar residues) spans 1201-1218 (ASSSTQGARAQQAPNTEM). Residues 1259-1274 (DIQEEEEEEEEEEEEE) are compositionally biased toward acidic residues. The span at 1278-1292 (RTCSFQKQVAGNSIR) shows a compositional bias: polar residues. Over residues 1333–1346 (PEEEEEEEEDEEEE) the composition is skewed to acidic residues. 2 stretches are compositionally biased toward basic and acidic residues: residues 1420–1429 (RPPDPREHCS) and 1554–1586 (AWEK…EARG). One can recognise an SH3 2 domain in the interval 1625-1693 (LPVRIFVALF…PCNMVAEVAV (69 aa)). Disordered regions lie at residues 1723 to 1761 (VYST…VPSA) and 1823 to 1857 (SNFL…RVQC). An SH3 3 domain is found at 1764-1831 (KAPHSMVAAF…PSNFLEGPGP (68 aa)).

This sequence belongs to the RIMBP family. Interacts with RIMS1 and RIMS2. Interacts with TSPO. Interacts with CACNA1A. Predominantly expressed in brain, pituitary gland and thymus in adults. In adult brain, highest expression found in temporal lobe and the putamen, followed by amygdala, caudate nucleus, cerebral cortex, occipital and frontal lobe. A high expression level is also observed in fetal tissues like brain, heart, kidney and thymus.

Its subcellular location is the cytoplasm. It localises to the mitochondrion. Its function is as follows. Required for synaptic transmission regulation. It probably controls the recruitement of voltage-gated calcium channels to the presynaptic membrane, and modulates neurotransmitter release. The chain is Peripheral-type benzodiazepine receptor-associated protein 1 from Homo sapiens (Human).